Reading from the N-terminus, the 146-residue chain is General odorant-binding protein 19a (146 aa).

Positions 1-22 (MKFHLLLVCVAISLGPIPQSEA) are cleaved as a signal peptide. Cystine bridges form between cysteine 40–cysteine 72, cysteine 68–cysteine 126, and cysteine 113–cysteine 135.

It belongs to the PBP/GOBP family. In terms of tissue distribution, expressed in adult olfactory system. Expressed exclusively in a subset of chemosensory sensilla on the third antennal segment.

Its subcellular location is the secreted. In terms of biological role, present in the aqueous fluid surrounding olfactory sensory dendrites and are thought to aid in the capture and transport of hydrophobic odorants into and through this fluid. The polypeptide is General odorant-binding protein 19a (Obp19a) (Drosophila melanogaster (Fruit fly)).